Consider the following 307-residue polypeptide: Olfactory receptor 5M3 (307 aa).

Residues 1–23 (MLNFTDVTEFILLGLTSRREWQV) lie on the Extracellular side of the membrane. Asparagine 3 carries an N-linked (GlcNAc...) asparagine glycan. Residues 24 to 44 (LFFIIFLVVYIITMVGNIGMM) traverse the membrane as a helical segment. The Cytoplasmic portion of the chain corresponds to 45 to 52 (VLIKVSPQ). The helical transmembrane segment at 53-73 (LNNPMYFFLSHLSFVDVWFSS) threads the bilayer. Residues 74–97 (NVTPKMLENLLSDKKTITYAGCLV) lie on the Extracellular side of the membrane. Residues cysteine 95 and cysteine 187 are joined by a disulfide bond. The chain crosses the membrane as a helical span at residues 98–118 (QCFFFIALVHVEIFILAAMAF). The Cytoplasmic segment spans residues 119 to 137 (DRYMAIGNPLLYGSKMSRV). Residues 138-158 (VCIRLITFPYIYGFLTSLAAT) form a helical membrane-spanning segment. Residues 159–194 (LWTYGLYFCGKIEINHFYCADPPLIKMACAGTFVKE) are Extracellular-facing. The chain crosses the membrane as a helical span at residues 195-215 (YTMIILAGINFTYSLTVIIIS). The Cytoplasmic portion of the chain corresponds to 216 to 235 (YLFILIAILRMRSAEGRQKA). Residues 236–256 (FSTCGSHLTAVIIFYGTLIFM) traverse the membrane as a helical segment. Residues 257–269 (YLRRPTEESVEQG) are Extracellular-facing. A helical transmembrane segment spans residues 270-290 (KMVAVFYTTVIPMLNPMIYSL). Residues 291–307 (RNKDVKKAMMKVISRSC) lie on the Cytoplasmic side of the membrane.

This sequence belongs to the G-protein coupled receptor 1 family.

It localises to the cell membrane. Functionally, odorant receptor. This Homo sapiens (Human) protein is Olfactory receptor 5M3 (OR5M3).